The primary structure comprises 61 residues: Potassium channel toxin alpha-KTx 6.9 (61 aa).

An N-terminal signal peptide occupies residues 1–23; the sequence is MNAKFILLLLVVTTTTLLPDAKG. 4 disulfides stabilise this stretch: cysteine 29/cysteine 50, cysteine 35/cysteine 55, cysteine 39/cysteine 57, and cysteine 45/cysteine 60.

Belongs to the short scorpion toxin superfamily. Potassium channel inhibitor family. Alpha-KTx 06 subfamily. Expressed by the venom gland.

Its subcellular location is the secreted. Its function is as follows. Inhibits Kv1.2/KCNA2 and Kv1.3/KCNA3 voltage-gated potassium channels. This is Potassium channel toxin alpha-KTx 6.9 from Opistophthalmus carinatus (African yellow leg scorpion).